Here is a 551-residue protein sequence, read N- to C-terminus: Interleukin-2 receptor subunit beta (551 aa).

Residues 1 to 26 (MAAPALSWRLPLLILLLPLATSWASA) form the signal peptide. Residues 27–240 (AVNGTSQFTC…TKPAALGKDT (214 aa)) lie on the Extracellular side of the membrane. N-linked (GlcNAc...) asparagine glycans are attached at residues N29, N43, and N71. 3 disulfides stabilise this stretch: C36–C46, C59–C110, and C74–C86. The region spanning 134–234 (APISLQVVHV…QPLAFRTKPA (101 aa)) is the Fibronectin type-III domain. N149 carries an N-linked (GlcNAc...) asparagine glycan. The WSXWS motif signature appears at 220–224 (WSPWS). Residues 241 to 265 (IPWLGHLLVGLSGAFGFIILVYLLI) form a helical membrane-spanning segment. At 266–551 (NCRNTGPWLK…LQGQDPTHLV (286 aa)) the chain is on the cytoplasmic side. The Box 1 motif motif lies at 278-286 (LKCNTPDPS). 2 disordered regions span residues 389–416 (EEDP…GEDD) and 432–486 (PSLL…VDFQ).

The protein belongs to the type I cytokine receptor family. Type 4 subfamily. In terms of assembly, non-covalent dimer of an alpha and a beta subunit. IL2R exists in 3 different forms: a high affinity dimer, an intermediate affinity monomer (beta subunit), and a low affinity monomer (alpha subunit). The high and intermediate affinity forms also associate with a gamma subunit. Interacts with SHB upon interleukin stimulation. As to quaternary structure, (Microbial infection) Interacts with HTLV-1 accessory protein p12I.

The protein localises to the cell membrane. In terms of biological role, receptor for interleukin-2. This beta subunit is involved in receptor mediated endocytosis and transduces the mitogenic signals of IL2. Probably in association with IL15RA, involved in the stimulation of neutrophil phagocytosis by IL15. The sequence is that of Interleukin-2 receptor subunit beta from Homo sapiens (Human).